A 212-amino-acid polypeptide reads, in one-letter code: Superoxide dismutase [Fe] 1, chloroplastic (212 aa).

A2 bears the N-acetylalanine mark. 4 residues coordinate Fe cation: H35, H87, D169, and H173.

The protein belongs to the iron/manganese superoxide dismutase family. Homodimer. Interacts with cpn20/cpn21. It depends on Fe cation as a cofactor.

Its subcellular location is the cell membrane. It localises to the plastid. It is found in the chloroplast membrane. The protein resides in the chloroplast stroma. The enzyme catalyses 2 superoxide + 2 H(+) = H2O2 + O2. Its activity is regulated as follows. Activated by cpn20/cpn21. Destroys superoxide anion radicals which are normally produced within the cells and which are toxic to biological systems. The polypeptide is Superoxide dismutase [Fe] 1, chloroplastic (FSD1) (Arabidopsis thaliana (Mouse-ear cress)).